The following is a 352-amino-acid chain: UDP-N-acetylglucosamine--N-acetylmuramyl-(pentapeptide) pyrophosphoryl-undecaprenol N-acetylglucosamine transferase (352 aa).

Residues 11–13 (TGG), asparagine 120, arginine 161, serine 188, and glutamine 286 contribute to the UDP-N-acetyl-alpha-D-glucosamine site.

This sequence belongs to the glycosyltransferase 28 family. MurG subfamily.

The protein resides in the cell inner membrane. The enzyme catalyses di-trans,octa-cis-undecaprenyl diphospho-N-acetyl-alpha-D-muramoyl-L-alanyl-D-glutamyl-meso-2,6-diaminopimeloyl-D-alanyl-D-alanine + UDP-N-acetyl-alpha-D-glucosamine = di-trans,octa-cis-undecaprenyl diphospho-[N-acetyl-alpha-D-glucosaminyl-(1-&gt;4)]-N-acetyl-alpha-D-muramoyl-L-alanyl-D-glutamyl-meso-2,6-diaminopimeloyl-D-alanyl-D-alanine + UDP + H(+). It participates in cell wall biogenesis; peptidoglycan biosynthesis. Functionally, cell wall formation. Catalyzes the transfer of a GlcNAc subunit on undecaprenyl-pyrophosphoryl-MurNAc-pentapeptide (lipid intermediate I) to form undecaprenyl-pyrophosphoryl-MurNAc-(pentapeptide)GlcNAc (lipid intermediate II). The sequence is that of UDP-N-acetylglucosamine--N-acetylmuramyl-(pentapeptide) pyrophosphoryl-undecaprenol N-acetylglucosamine transferase from Prochlorococcus marinus (strain NATL2A).